A 323-amino-acid polypeptide reads, in one-letter code: Lipoyl synthase (323 aa).

7 residues coordinate [4Fe-4S] cluster: Cys-61, Cys-66, Cys-72, Cys-87, Cys-91, Cys-94, and Ser-300. A Radical SAM core domain is found at 73–289 (WDKKHATFMI…ETVAYSKGFL (217 aa)).

Belongs to the radical SAM superfamily. Lipoyl synthase family. Requires [4Fe-4S] cluster as cofactor.

It localises to the cytoplasm. It catalyses the reaction [[Fe-S] cluster scaffold protein carrying a second [4Fe-4S](2+) cluster] + N(6)-octanoyl-L-lysyl-[protein] + 2 oxidized [2Fe-2S]-[ferredoxin] + 2 S-adenosyl-L-methionine + 4 H(+) = [[Fe-S] cluster scaffold protein] + N(6)-[(R)-dihydrolipoyl]-L-lysyl-[protein] + 4 Fe(3+) + 2 hydrogen sulfide + 2 5'-deoxyadenosine + 2 L-methionine + 2 reduced [2Fe-2S]-[ferredoxin]. The protein operates within protein modification; protein lipoylation via endogenous pathway; protein N(6)-(lipoyl)lysine from octanoyl-[acyl-carrier-protein]: step 2/2. Catalyzes the radical-mediated insertion of two sulfur atoms into the C-6 and C-8 positions of the octanoyl moiety bound to the lipoyl domains of lipoate-dependent enzymes, thereby converting the octanoylated domains into lipoylated derivatives. The chain is Lipoyl synthase from Rhizobium etli (strain CIAT 652).